We begin with the raw amino-acid sequence, 523 residues long: Transcription initiation factor TFIID subunit 4 (523 aa).

2 disordered regions span residues 1 to 100 and 185 to 241; these read MSLP…AASD and ASVE…VQGG. Over residues 58-77 the composition is skewed to low complexity; sequence QMQPPRQPIQQQMQHFQSPS. Residues 78-87 are compositionally biased toward pro residues; sequence PMAPQGPPGT. Residues 101–199 form the TAFH domain; that stretch reads DKNVTKCVRF…VNPPPGYVFN (99 aa). Residues 204 to 213 are compositionally biased toward pro residues; sequence PGPPQPPPPQ. Positions 214–236 are enriched in low complexity; sequence QQSQQQPPLEMRQIPNPNQIPPQ. Positions 329 to 383 are histone-fold; the sequence is LKPDEVLNRITKRMMSSCSVEEEALVAISDAVESHLRELITLMAGVAEHRVESLR. Residues 333 to 382 form a necessary and sufficient for interaction with oma-1 region; it reads EVLNRITKRMMSSCSVEEEALVAISDAVESHLRELITLMAGVAEHRVESL. The interval 407–435 is disordered; that stretch reads QEEELRESREKESLIRMSKNKNSGKETIE.

This sequence belongs to the TAF4 family. Component of the TFIID basal transcription factor complex, composed of TATA-box-binding protein tbp-1, and a number of TBP-associated factors (TAFs). Interacts (via histone-fold domain) with oma-1 (via histone-fold domain). May also interact with oma-2. Interacts (via histone-fold domain) with taf-12 (via the histone-fold domain).

It localises to the nucleus. The protein resides in the cytoplasm. The TFIID basal transcription factor complex plays a major role in the initiation of RNA polymerase II (Pol II)-dependent transcription. TFIID recognizes and binds promoters via its subunit tbp-1, a TATA-box-binding protein, and promotes assembly of the pre-initiation complex (PIC). The TFIID complex consists of tbp-1 and TBP-associated factors (TAFs), including taf-4. Essential for early embryonic development, probably acting via activating transcription initiation by RNA polymerase II, as part of the TFIID complex. In early embryos, but not oocytes, remains, presumably inactive, in the cytoplasm as a result of binding to oma-1. Upon degradation of oma-1, taf-4 is released and bound by taf-12, and the taf-4/12 heterodimer translocates to the nucleus and transcriptional repression is relieved. Involved in lifespan extension in a manner dependent upon mitochondrial function. Plays a role in modulating polyribosome formation. In Caenorhabditis elegans, this protein is Transcription initiation factor TFIID subunit 4.